Reading from the N-terminus, the 111-residue chain is Putative gamma-glutamylcyclotransferase BH1612 (111 aa).

14–17 (YGHL) contacts substrate. Catalysis depends on Glu-55, which acts as the Proton acceptor.

The protein belongs to the gamma-glutamylcyclotransferase family.

Putative gamma-glutamylcyclotransferase. This Halalkalibacterium halodurans (strain ATCC BAA-125 / DSM 18197 / FERM 7344 / JCM 9153 / C-125) (Bacillus halodurans) protein is Putative gamma-glutamylcyclotransferase BH1612.